Consider the following 250-residue polypeptide: Probable 2' cyclic ADP-D-ribose synthase TcpB (250 aa).

Residues 1–46 (MSKEKQAQSKAHKAQQAISSAKSLSTQKSKMSELERATRDGAAIGK) form a disordered region. Residues 1-117 (MSKEKQAQSK…TASATMEAEE (117 aa)) are necessary and sufficient for phosphoinositide binding. A compositionally biased stretch (low complexity) spans 14-23 (AQQAISSAKS). Residues 30–39 (KMSELERATR) are compositionally biased toward basic and acidic residues. The 134-residue stretch at 117-250 (EEYDFFISHA…EIAKELHSLI (134 aa)) folds into the TIR domain. E192 is a catalytic residue.

As to quaternary structure, homodimer; may also form oligomers. Interacts with host TIRAP. Interacts with host MYD88. Interaction with host MYD88 was not confirmed by another study. Interacts with host TLR4. Abolishes the interaction of host TIRAP with TLR4.

It localises to the secreted. It is found in the host cell membrane. The catalysed reaction is NAD(+) + H2O = ADP-D-ribose + nicotinamide + H(+). It catalyses the reaction NAD(+) = 2'cADPR + nicotinamide + H(+). Virulence factor that interferes with host Toll-like receptor 2 (TLR2) and TLR4 signaling, resulting in the reduction of dendritic cell maturation, inhibition of pro-inflammatory cytokine secretion and impaired NF-kappa-B activation in macrophages. Interferes with host TLR4 signaling by abolishing host TLR4-TIRAP interaction (but not host TIRAP-MYD88 interaction) and its downstream signaling. Inhibits host TLR 2 induced NF-kappa-B activation and TNF (tumor necrosis factor) secretion. Binds phosphoinositide (PtdIns) via its N-terminal domain. Has NAD(+) hydrolase (NADase) activity, catalyzes cleavage of NAD(+) into ADP-D-ribose (ADPR) and nicotinamide. Also generates a cyclization variant of cyclic ADPR (cADPR), termed v-cADPR (probably 2'cADPR). The protein is Probable 2' cyclic ADP-D-ribose synthase TcpB of Brucella melitensis biotype 1 (strain ATCC 23456 / CCUG 17765 / NCTC 10094 / 16M).